Consider the following 313-residue polypeptide: Trimeric intracellular cation channel type 1B.2 (313 aa).

Over 1-28 (MGWVPDEWSIDHDTLIDAGGYVQKLKLY) the chain is Lumenal. The chain crosses the membrane as a helical span at residues 29–48 (PYFDAAHYVLTCLSVRHDLG). Residues 49–57 (PDAISFSRK) are Cytoplasmic-facing. Residues 58–82 (HPFSCWLSCMLMSFAGSFLSCFLLG) form a discontinuously helical membrane-spanning segment. The Lumenal segment spans residues 83 to 90 (EPIISPLK). The chain crosses the membrane as a helical span at residues 91 to 108 (QHADILLGSIVWYLVFYS). The Cytoplasmic portion of the chain corresponds to 109–118 (PFDVVFRLAT). The helical transmembrane segment at 119 to 149 (WFPVKLGLSVLKEVQRTHKIAAGVKHAVRIY) threads the bilayer. The a 1,2-diacyl-sn-glycero-3-phospho-(1D-myo-inositol-4,5-bisphosphate) site is built by Lys130 and Arg134. Residues 150–151 (PE) are Lumenal-facing. A discontinuously helical membrane pass occupies residues 152 to 178 (SYLVQILVGVAKGAGSGVVKIVEQLAR). An a 1,2-diacyl-sn-glycero-3-phospho-(1D-myo-inositol-4,5-bisphosphate)-binding site is contributed by Gly168. Residues 179–192 (GTWHPTNHEILRPS) are Cytoplasmic-facing. The chain crosses the membrane as a helical span at residues 193 to 210 (FTTKACVIASIVFTLERH). Over 211–216 (SMYVTA) the chain is Lumenal. The helical transmembrane segment at 217-239 (PHDLVYLCVVGFFIYFKLASLCL) threads the bilayer. The Cytoplasmic portion of the chain corresponds to 240 to 313 (SVHDVLMPIE…MSNGTDKKNN (74 aa)).

The protein belongs to the TMEM38 family. Homotrimer; trimerization probably requires binding to phosphatidylinositol 4,5-bisphosphate (PIP2).

The protein resides in the endoplasmic reticulum membrane. In terms of biological role, potassium channel that mediates transmembrane potassium transport. Might be required for maintenance of rapid intracellular calcium release. May act as a potassium counter-ion channel that functions in synchronization with calcium release from intracellular stores. Binds phosphatidylinositol 4,5-bisphosphate (PIP2). The protein is Trimeric intracellular cation channel type 1B.2 of Caenorhabditis elegans.